The following is a 562-amino-acid chain: Glucocorticoid modulatory element-binding protein 1 (562 aa).

A2 is subject to N-acetylalanine. The SAND domain occupies 72-156 (ASSIEGNEDM…RKMMDSGQID (85 aa)). A Zn(2+)-binding site is contributed by C103. The DNA site is built by K129, K133, K136, and R147. Zn(2+)-binding residues include H160, C164, and C168. Positions 311–355 (LDNRRKQVEQGEEQFLYTLADLERQLEEQKKQAQDPRLKSQTVQN) form a coiled coil. The disordered stretch occupies residues 360–384 (PVSTPKPPKRPRLQRPASTTVLSPS). Polar residues predominate over residues 375-384 (PASTTVLSPS).

Homodimer, and heterodimer of GMEB1 and GMEB2. Interacts with TRIM63. Interacts with the glucocorticoid receptor (NR3C1) and NCOA2/TIF2. May interact with HSP27 and CREB-binding protein (CBP). In terms of tissue distribution, ubiquitous. Low levels were detected in heart, brain, spleen, lung, liver, skeletal muscle, kidney and testis.

Its subcellular location is the nucleus. The protein localises to the cytoplasm. Functionally, trans-acting factor that binds to glucocorticoid modulatory elements (GME) present in the TAT (tyrosine aminotransferase) promoter and increases sensitivity to low concentrations of glucocorticoids. Also binds to the transferrin receptor promoter. The protein is Glucocorticoid modulatory element-binding protein 1 (Gmeb1) of Mus musculus (Mouse).